Here is a 293-residue protein sequence, read N- to C-terminus: Mating-type protein A-1 (293 aa).

The alpha box DNA-binding region spans 42–97 (AAKKKVNGFMGFRSYYSPLFSQLPQKERSPFMTILWQHDPFHNEWDFMCSVYSSIR).

Belongs to the MATALPHA1 family.

It is found in the nucleus. In terms of biological role, mating type proteins are sequence specific DNA-binding proteins that act as master switches in yeast differentiation by controlling gene expression in a cell type-specific fashion. Transcriptional activator that induces the transcription of A-specific genes like mating factor ccg-4. Required for mating as an A-cell and for blocking of heterokaryon formation (vegetative incompatibility). This Neurospora crassa (strain ATCC 24698 / 74-OR23-1A / CBS 708.71 / DSM 1257 / FGSC 987) protein is Mating-type protein A-1 (mtA-1).